A 135-amino-acid chain; its full sequence is Crossover junction endodeoxyribonuclease Hje (135 aa).

Residues E10, D39, and E52 each coordinate Mg(2+).

Belongs to the Holliday junction resolvase Hjc family. Hje subfamily. In terms of assembly, homodimer. The cofactor is Mg(2+).

It catalyses the reaction Endonucleolytic cleavage at a junction such as a reciprocal single-stranded crossover between two homologous DNA duplexes (Holliday junction).. A structure-specific endonuclease that resolves Holliday junction (HJ) intermediates during genetic recombination. Acts only on 4-way DNA junctions in a sequence non-specific manner; introduces paired nicks in opposing strands 2 bases 3' of the point of strand exchange only on continuous strands of 4-way junction DNA. Cleaves both mobile and immobile junctions. Plays a more direct role in DNA repair than Hjc. Overexpression of this protein decreases the growth rate, and leads to genomic instability, and global transcriptomic changes. In Saccharolobus islandicus (strain REY15A) (Sulfolobus islandicus), this protein is Crossover junction endodeoxyribonuclease Hje.